The primary structure comprises 592 residues: ATP-dependent lipid A-core flippase (592 aa).

6 consecutive transmembrane segments (helical) span residues 31–51 (LSSF…EGII), 76–96 (AMLV…TYFL), 134–154 (AVIF…ITLV), 161–181 (LALL…VAVI), 261–281 (VTQF…MVQA), and 288–308 (VGGF…LKHL). The ABC transmembrane type-1 domain occupies 35–317 (ILAMVAMGVV…LTDVNQPMQR (283 aa)). Positions 349–587 (LRFEHVTFRY…DGLYAGLHRI (239 aa)) constitute an ABC transporter domain. 383-390 (GPSGSGKT) contacts ATP.

The protein belongs to the ABC transporter superfamily. Lipid exporter (TC 3.A.1.106) family. As to quaternary structure, homodimer.

It is found in the cell inner membrane. It catalyses the reaction ATP + H2O + lipid A-core oligosaccharideSide 1 = ADP + phosphate + lipid A-core oligosaccharideSide 2.. Its function is as follows. Involved in lipopolysaccharide (LPS) biosynthesis. Translocates lipid A-core from the inner to the outer leaflet of the inner membrane. Transmembrane domains (TMD) form a pore in the inner membrane and the ATP-binding domain (NBD) is responsible for energy generation. The polypeptide is ATP-dependent lipid A-core flippase (Ralstonia nicotianae (strain ATCC BAA-1114 / GMI1000) (Ralstonia solanacearum)).